Here is a 383-residue protein sequence, read N- to C-terminus: Trichodiene synthase (383 aa).

It belongs to the trichodiene synthase family.

The catalysed reaction is (2E,6E)-farnesyl diphosphate = trichodiene + diphosphate. Its pathway is sesquiterpene biosynthesis; trichothecene biosynthesis. TS is a member of the terpene cyclase group of enzymes. It catalyzes the isomerization and cyclization of farnesyl pyro-phosphate to form trichodiene, the first cyclic intermediate in the biosynthetic pathway for trichothecenes. It serves to branch trichothecene biosynthesis from the isoprenoid pathway. This is Trichodiene synthase (TRI5) from Gibberella pulicaris.